Consider the following 83-residue polypeptide: Protein MATERNALLY EXPRESSED GENE 3 (83 aa).

The N-terminal stretch at 1–22 is a signal peptide; that stretch reads MQWLAFVAPRWRCVCDQELSAQ. Cys-60 and Cys-82 are joined by a disulfide.

It belongs to the MEG family. In terms of tissue distribution, expressed in endosperm, anther and pollen.

The polypeptide is Protein MATERNALLY EXPRESSED GENE 3 (MEG3) (Zea mays (Maize)).